Consider the following 300-residue polypeptide: DNA repair protein RecO (300 aa).

The protein belongs to the RecO family.

Its function is as follows. Involved in DNA repair and RecF pathway recombination. In Nostoc punctiforme (strain ATCC 29133 / PCC 73102), this protein is DNA repair protein RecO.